The chain runs to 1342 residues: DNA-directed RNA polymerase subunit beta (1342 aa).

It belongs to the RNA polymerase beta chain family. The RNAP catalytic core consists of 2 alpha, 1 beta, 1 beta' and 1 omega subunit. When a sigma factor is associated with the core the holoenzyme is formed, which can initiate transcription.

The catalysed reaction is RNA(n) + a ribonucleoside 5'-triphosphate = RNA(n+1) + diphosphate. In terms of biological role, DNA-dependent RNA polymerase catalyzes the transcription of DNA into RNA using the four ribonucleoside triphosphates as substrates. The sequence is that of DNA-directed RNA polymerase subunit beta from Citrobacter koseri (strain ATCC BAA-895 / CDC 4225-83 / SGSC4696).